The primary structure comprises 372 residues: Peptide chain release factor 2 (372 aa).

Glutamine 253 is modified (N5-methylglutamine).

It belongs to the prokaryotic/mitochondrial release factor family. Post-translationally, methylated by PrmC. Methylation increases the termination efficiency of RF2.

It localises to the cytoplasm. Peptide chain release factor 2 directs the termination of translation in response to the peptide chain termination codons UGA and UAA. This Nocardia farcinica (strain IFM 10152) protein is Peptide chain release factor 2.